The primary structure comprises 353 residues: UDP-N-acetylenolpyruvoylglucosamine reductase (353 aa).

The FAD-binding PCMH-type domain occupies 31–201 (LASHAPAFVA…GSVRFALPRP (171 aa)). Residue R177 is part of the active site. S250 acts as the Proton donor in catalysis. The active site involves E346.

It belongs to the MurB family. Requires FAD as cofactor.

The protein resides in the cytoplasm. It carries out the reaction UDP-N-acetyl-alpha-D-muramate + NADP(+) = UDP-N-acetyl-3-O-(1-carboxyvinyl)-alpha-D-glucosamine + NADPH + H(+). It participates in cell wall biogenesis; peptidoglycan biosynthesis. Cell wall formation. This chain is UDP-N-acetylenolpyruvoylglucosamine reductase, found in Bordetella parapertussis (strain 12822 / ATCC BAA-587 / NCTC 13253).